The sequence spans 452 residues: MTAAHLTARRAGSLKGTVRAPGDKSISHRALILGALASGLTEVDGLLESDDVRRTAAAMQAFGAGVIRTGEGAWRVEGKGGFAEPGDVIDCGNAGTGVRLIMGAAAGFDLAATFTGDSSLRGRPMNRVLKPLGEMGASWICRAGGRLPLTLKGGSLKRIAYRLPEPSAQVKSAVLLAGLSADGGAEVFEAEATRDHTERMLRGFGAEVDVTEESAGRRIVLPGGQALKGTRIRVPGDPSSAAFPLVAALVTPGSQVTVEGMLLNPLRIGLLETLGDMGADLSVTNVRDEGGETVADVTARHSALEGVETPPERAPSMIDEYPILAVAAAFASGRTVMRGIGEMRVKESDRIALMAAGLAACGVEVEEEPEGMIVTGRGGAVRGGGRITTHGDHRIAMSHLVLGMAAEEPVSVDEPGMIATSFPGFVEMMRGLGADVGADVGGDVGADSPVGA.

The 3-phosphoshikimate site is built by Lys-24, Ser-25, and Arg-29. Lys-24 serves as a coordination point for phosphoenolpyruvate. Phosphoenolpyruvate is bound by residues Gly-95 and Arg-123. 3-phosphoshikimate contacts are provided by Ser-167, Gln-169, Asp-319, and Lys-346. Gln-169 serves as a coordination point for phosphoenolpyruvate. The Proton acceptor role is filled by Asp-319. The phosphoenolpyruvate site is built by Arg-350 and Arg-394.

The protein belongs to the EPSP synthase family. Monomer.

The protein resides in the cytoplasm. The catalysed reaction is 3-phosphoshikimate + phosphoenolpyruvate = 5-O-(1-carboxyvinyl)-3-phosphoshikimate + phosphate. It functions in the pathway metabolic intermediate biosynthesis; chorismate biosynthesis; chorismate from D-erythrose 4-phosphate and phosphoenolpyruvate: step 6/7. Catalyzes the transfer of the enolpyruvyl moiety of phosphoenolpyruvate (PEP) to the 5-hydroxyl of shikimate-3-phosphate (S3P) to produce enolpyruvyl shikimate-3-phosphate and inorganic phosphate. The protein is 3-phosphoshikimate 1-carboxyvinyltransferase of Phenylobacterium zucineum (strain HLK1).